Here is a 522-residue protein sequence, read N- to C-terminus: Protein nucleotidyltransferase YdiU (522 aa).

The ATP site is built by Gly109, Gly111, Arg112, Lys132, Asp144, Gly145, Arg195, and Arg202. The active-site Proton acceptor is the Asp271. Mg(2+) is bound by residues Asn272 and Asp281. An ATP-binding site is contributed by Asp281.

This sequence belongs to the SELO family. Mg(2+) serves as cofactor. Requires Mn(2+) as cofactor.

The enzyme catalyses L-seryl-[protein] + ATP = 3-O-(5'-adenylyl)-L-seryl-[protein] + diphosphate. The catalysed reaction is L-threonyl-[protein] + ATP = 3-O-(5'-adenylyl)-L-threonyl-[protein] + diphosphate. It catalyses the reaction L-tyrosyl-[protein] + ATP = O-(5'-adenylyl)-L-tyrosyl-[protein] + diphosphate. It carries out the reaction L-histidyl-[protein] + UTP = N(tele)-(5'-uridylyl)-L-histidyl-[protein] + diphosphate. The enzyme catalyses L-seryl-[protein] + UTP = O-(5'-uridylyl)-L-seryl-[protein] + diphosphate. The catalysed reaction is L-tyrosyl-[protein] + UTP = O-(5'-uridylyl)-L-tyrosyl-[protein] + diphosphate. Nucleotidyltransferase involved in the post-translational modification of proteins. It can catalyze the addition of adenosine monophosphate (AMP) or uridine monophosphate (UMP) to a protein, resulting in modifications known as AMPylation and UMPylation. The chain is Protein nucleotidyltransferase YdiU from Burkholderia multivorans (strain ATCC 17616 / 249).